The sequence spans 242 residues: Tryptophan synthase alpha chain (242 aa).

Active-site proton acceptor residues include Glu31 and Asp42.

The protein belongs to the TrpA family. In terms of assembly, tetramer of two alpha and two beta chains.

It catalyses the reaction (1S,2R)-1-C-(indol-3-yl)glycerol 3-phosphate + L-serine = D-glyceraldehyde 3-phosphate + L-tryptophan + H2O. Its pathway is amino-acid biosynthesis; L-tryptophan biosynthesis; L-tryptophan from chorismate: step 5/5. Its function is as follows. The alpha subunit is responsible for the aldol cleavage of indoleglycerol phosphate to indole and glyceraldehyde 3-phosphate. In Staphylococcus aureus (strain USA300), this protein is Tryptophan synthase alpha chain.